We begin with the raw amino-acid sequence, 538 residues long: D-alanyl-D-alanine carboxypeptidase (538 aa).

The disordered stretch occupies residues 1 to 21; it reads MKQSSPEPLRPRRTGGRGGAR. A signal peptide spans 1–49; that stretch reads MKQSSPEPLRPRRTGGRGGARRAAALVTIPLLPMTLLGASPALADASGA. The Acyl-ester intermediate role is filled by Ser98. The Proton acceptor role is filled by Lys101. An absent in class-A beta-lactamases region spans residues 146–319; the sequence is TLSAEDLDAM…KGDVGLGGVP (174 aa). Residue Ser347 is part of the active site. Lys459 contacts substrate. Positions 516–538 are cleaved as a propeptide — removed in mature form; it reads GARMMRGPVQGSGELECSWVQAC.

It belongs to the peptidase S13 family.

Its subcellular location is the secreted. It carries out the reaction Preferential cleavage: (Ac)2-L-Lys-D-Ala-|-D-Ala. Also transpeptidation of peptidyl-alanyl moieties that are N-acyl substituents of D-alanine.. The protein operates within cell wall biogenesis; peptidoglycan biosynthesis. Its activity is regulated as follows. Inhibited by benzylpenicillin, cephaloridine, ampicillin and cetiofur. In terms of biological role, removes C-terminal D-alanyl residues from sugar-peptide cell wall precursors. This Actinomadura sp. (strain R39) protein is D-alanyl-D-alanine carboxypeptidase (dac).